The primary structure comprises 351 residues: Photosystem II D2 protein (351 aa).

A helical transmembrane segment spans residues 39-59 (TAYLSIGGWLTGTTFVTSWYT). Position 116 (histidine 116) interacts with chlorophyll a. A helical transmembrane segment spans residues 123 to 139 (GFMLRQFEIARLVGIRP). Glutamine 128 and asparagine 141 together coordinate pheophytin a. Residues 151 to 164 (VFVSVFLMYPLGQS) form a helical membrane-spanning segment. Histidine 196 serves as a coordination point for chlorophyll a. A helical transmembrane segment spans residues 206-226 (GALLCAIHGATVENTLFEDGE). Residues histidine 213 and phenylalanine 260 each contribute to the a plastoquinone site. Residue histidine 213 coordinates Fe cation. Histidine 267 serves as a coordination point for Fe cation. A helical membrane pass occupies residues 277-293 (GLWTSAIGIIGLALNLR).

Belongs to the reaction center PufL/M/PsbA/D family. As to quaternary structure, PSII is composed of 1 copy each of membrane proteins PsbA, PsbB, PsbC, PsbD, PsbE, PsbF, PsbH, PsbI, PsbJ, PsbK, PsbL, PsbM, PsbT, PsbX, PsbY, PsbZ, Psb30/Ycf12, peripheral proteins PsbO, CyanoQ (PsbQ), PsbU, PsbV and a large number of cofactors. It forms dimeric complexes. The D1/D2 heterodimer binds P680, chlorophylls that are the primary electron donor of PSII, and subsequent electron acceptors. It shares a non-heme iron and each subunit binds pheophytin, quinone, additional chlorophylls, carotenoids and lipids. There is also a Cl(-1) ion associated with D1 and D2, which is required for oxygen evolution. The PSII complex binds additional chlorophylls, carotenoids and specific lipids. is required as a cofactor.

Its subcellular location is the cellular thylakoid membrane. It carries out the reaction 2 a plastoquinone + 4 hnu + 2 H2O = 2 a plastoquinol + O2. Functionally, photosystem II (PSII) is a light-driven water:plastoquinone oxidoreductase that uses light energy to abstract electrons from H(2)O, generating O(2) and a proton gradient subsequently used for ATP formation. It consists of a core antenna complex that captures photons, and an electron transfer chain that converts photonic excitation into a charge separation. The D1/D2 (PsbA/PsbD) reaction center heterodimer binds P680, the primary electron donor of PSII as well as several subsequent electron acceptors. D2 is needed for assembly of a stable PSII complex. This is Photosystem II D2 protein from Synechococcus sp. (strain CC9311).